The chain runs to 267 residues: Corrinoid adenosyltransferase EutT (267 aa).

2 residues coordinate a divalent metal cation: Cys80 and Cys83.

This sequence belongs to the Cob(I)alamin adenosyltransferase family. EutT subfamily. Homodimer. A divalent metal cation serves as cofactor.

It localises to the bacterial microcompartment. It catalyses the reaction 2 cob(II)alamin + reduced [electron-transfer flavoprotein] + 2 ATP + 2 H2O = 2 adenosylcob(III)alamin + oxidized [electron-transfer flavoprotein] + 2 phosphate + 2 diphosphate + 3 H(+). It carries out the reaction 2 cob(II)inamide + reduced [electron-transfer flavoprotein] + 2 ATP + 2 H2O = 2 adenosylcob(III)inamide + oxidized [electron-transfer flavoprotein] + 2 phosphate + 2 diphosphate + 3 H(+). The protein operates within amine and polyamine degradation; ethanolamine degradation. Functionally, converts cyanocobalamin (CN-B12) to adenosylcobalamin (AdoCbl), the inducer of the eut operon. Is not active on cobinamide nor other intermediates in the adenosylcobalamin synthetic pathway. Allows full induction of the eut operon. Can use ADP, CTP and dATP in place of ATP, and cobinamide in place of cobalamin, none are as efficiently used as ATP and cobalamin. In terms of biological role, expression of the eut operon allows this bacteria to use ethanolamine (EA) as a carbon, nitrogen and energy source. It relies on cobalamin (vitamin B12) both as a cofactor for the ethanolamine ammonia-lyase (EAL) activity and to induce the operon. EA enhances bacterial survival in macrophages in a concentration-dependent manner, suggesting it is an important nutrient during infection. The protein is Corrinoid adenosyltransferase EutT of Salmonella typhimurium (strain LT2 / SGSC1412 / ATCC 700720).